A 352-amino-acid chain; its full sequence is Protein-glutamate methylesterase/protein-glutamine glutaminase 2 (352 aa).

A Response regulatory domain is found at 1 to 116 (MVVDDSAVVR…KQFLTDSADE (116 aa)). A 4-aspartylphosphate modification is found at aspartate 50. One can recognise a CheB-type methylesterase domain in the interval 162 to 352 (AQTTERIVAI…MAREIVTQLQ (191 aa)). Catalysis depends on residues serine 174, histidine 200, and aspartate 296.

It belongs to the CheB family. In terms of processing, phosphorylated by CheA. Phosphorylation of the N-terminal regulatory domain activates the methylesterase activity.

It localises to the cytoplasm. It catalyses the reaction [protein]-L-glutamate 5-O-methyl ester + H2O = L-glutamyl-[protein] + methanol + H(+). The catalysed reaction is L-glutaminyl-[protein] + H2O = L-glutamyl-[protein] + NH4(+). Functionally, involved in chemotaxis. Part of a chemotaxis signal transduction system that modulates chemotaxis in response to various stimuli. Catalyzes the demethylation of specific methylglutamate residues introduced into the chemoreceptors (methyl-accepting chemotaxis proteins or MCP) by CheR. Also mediates the irreversible deamidation of specific glutamine residues to glutamic acid. This is Protein-glutamate methylesterase/protein-glutamine glutaminase 2 from Xanthomonas euvesicatoria pv. vesicatoria (strain 85-10) (Xanthomonas campestris pv. vesicatoria).